The following is a 325-amino-acid chain: L-lactate dehydrogenase (325 aa).

NAD(+) contacts are provided by residues Val19, Asp40, Lys45, Tyr70, and 84-85; that span reads GA. 2 residues coordinate substrate: Gln87 and Arg93. NAD(+)-binding positions include Thr106, 123 to 125, and Ser148; that span reads AAN. 125-128 serves as a coordination point for substrate; the sequence is NPVD. Substrate is bound at residue 153–156; sequence DSAR. Beta-D-fructose 1,6-bisphosphate is bound by residues Arg158 and His173. The active-site Proton acceptor is the His180. The residue at position 225 (Tyr225) is a Phosphotyrosine. Thr234 serves as a coordination point for substrate.

Belongs to the LDH/MDH superfamily. LDH family. Homotetramer.

It is found in the cytoplasm. It catalyses the reaction (S)-lactate + NAD(+) = pyruvate + NADH + H(+). It functions in the pathway fermentation; pyruvate fermentation to lactate; (S)-lactate from pyruvate: step 1/1. Allosterically activated by fructose 1,6-bisphosphate (FBP). Functionally, catalyzes the conversion of lactate to pyruvate. The sequence is that of L-lactate dehydrogenase from Latilactobacillus sakei (Lactobacillus sakei).